The sequence spans 256 residues: Autophagy-related protein 40 (256 aa).

The first 16 residues, 1–16 (MFNLILWPLFLLTSVA), serve as a signal peptide directing secretion. The Lumenal portion of the chain corresponds to 17-67 (IPLQLTLEVVYLTSSVDFSKASAAKTATSLGQSPVVITIYKSLLKYWSLYE). The helical transmembrane segment at 68–88 (FIHFIYLYTPIDAFLNFLPFT) threads the bilayer. The Cytoplasmic segment spans residues 89 to 256 (SLLMSFGSIC…DILDETTELD (168 aa)). Residues 197–243 (QPQGDKNRYQNGDRESTKNGAAYQKSSQQSSSFEQNFTSTEFPNDYD) form a disordered region. Residues 199 to 213 (QGDKNRYQNGDREST) show a composition bias toward basic and acidic residues. Residues 222–238 (SSQQSSSFEQNFTSTEF) are compositionally biased toward low complexity. The ATG8-binding motif lies at 242-245 (YDFM).

In terms of assembly, interacts with ATG8 and ATG11.

Its subcellular location is the endoplasmic reticulum membrane. It is found in the preautophagosomal structure membrane. Acts as a receptor for reticulophagy. Directs autophagic sequestration of folded tubules/sheets derived from the cortical endoplasmic reticulum (cER) and the cytoplasmic endoplasmic reticulum (cytoER) into autophagosomes. Is not required for the cytoplasm-to-vacuole targeting pathway, mitophagy, pexophagy, and non-selective autophagy. The protein is Autophagy-related protein 40 of Saccharomyces cerevisiae (strain ATCC 204508 / S288c) (Baker's yeast).